We begin with the raw amino-acid sequence, 1503 residues long: MDSKSVTPEPTNPFYASSGQSGKTYASVVAAAAAAAADKEDGGAVSSAKELDSSSEAVSGNSDKVGADDLSDSEKEKPNLVGDGKVSDEVDGSLKEDSTTPEATPKPEVVSGETIGVDDVSSLSPKPEAVSDGVGVVEENKKVKEDVEDIKDDGESKIENGSVDVDVKQASTDGESESKVKDVEEEDVGTKKDDEGESELGGKVDVDDKSDNVIEEEGVELTDKGDVIVNSSPVESVHVDVAKPGVVVVGDAEGSEELKINADAETLEVANKFDQIGDDDSGEFEPVSDKAIEEVEEKFTSESDSIADSSKLESVDTSAVEPEVVAAESGSEPKDVEKANGLEKGMTYAEVIKAASAVADNGTKEEESVLGGIVDDAEEGVKLNNKGDFVVDSSAIEAVNVDVAKPGVVVVGDVEVSEVLETDGNIPDVHNKFDPIGQGEGGEVELESDKATEEGGGKLVSEGDSMVDSSVVDSVDADINVAEPGVVVVGAAKEAVIKEDDKDDEVDKTISNIEEPDDLTAAYDGNFELAVKEISEAAKVEPDEPKVGVEVEELPVSESLKVGSVDAEEDSIPAAESQFEVRKVVEGDSAEEDENKLPVEDIVSSREFSFGGKEVDQEPSGEGVTRVDGSESEEETEEMIFGSSEAAKQFLAELEKASSGIEAHSDEANISNNMSDRIDGQIVTDSDEDVDTEDEGEEKMFDTAALAALLKAATGGGSSEGGNFTITSQDGTKLFSMDRPAGLSSSLRPLKPAAAPRANRSNIFSNSNVTMADETEINLSEEEKQKLEKLQSLRVKFLRLLQRLGHSAEDSIAAQVLYRLALLAGRQAGQLFSLDAAKKKAVESEAEGNEELIFSLNILVLGKAGVGKSATINSILGNQIASIDAFGLSTTSVREISGTVNGVKITFIDTPGLKSAAMDQSTNAKMLSSVKKVMKKCPPDIVLYVDRLDTQTRDLNNLPLLRTITASLGTSIWKNAIVTLTHAASAPPDGPSGTPLSYDVFVAQCSHIVQQSIGQAVGDLRLMNPSLMNPVSLVENHPLCRKNREGVKVLPNGQTWRSQLLLLCYSLKVLSETNSLLRPQEPLDHRKVFGFRVRSPPLPYLLSWLLQSRAHPKLPGDQGGDSVDSDIEIDDVSDSEQEDGEDDEYDQLPPFKPLRKTQLAKLSNEQRKAYFEEYDYRVKLLQKKQWREELKRMKEMKKNGKKLGESEFGYPGEEDDPENGAPAAVPVPLPDMVLPPSFDSDNSAYRYRYLEPTSQLLTRPVLDTHGWDHDCGYDGVNAEHSLALASRFPATATVQVTKDKKEFNIHLDSSVSAKHGENGSTMAGFDIQNVGKQLAYVVRGETKFKNLRKNKTTVGGSVTFLGENIATGVKLEDQIALGKRLVLVGSTGTMRSQGDSAYGANLEVRLREADFPIGQDQSSFGLSLVKWRGDLALGANLQSQVSVGRNSKIALRAGLNNKMSGQITVRTSSSDQLQIALTAILPIAMSIYKSIRPEATNDKYSMY.

A compositionally biased stretch (polar residues) spans 1-24 (MDSKSVTPEPTNPFYASSGQSGKT). The tract at residues 1-210 (MDSKSVTPEP…GGKVDVDDKS (210 aa)) is disordered. A helical transmembrane segment spans residues 21–37 (SGKTYASVVAAAAAAAA). Residue Ser-71 is modified to Phosphoserine. 2 stretches are compositionally biased toward basic and acidic residues: residues 85 to 98 (KVSD…KEDS) and 176 to 210 (SESK…DDKS). Phosphoserine is present on residues Ser-210, Ser-281, and Ser-288. Disordered regions lie at residues 298–338 (KFTS…DVEK) and 429–464 (VHNK…SEGD). The span at 447–456 (ESDKATEEGG) shows a compositional bias: basic and acidic residues. Phosphoserine occurs at positions 448, 461, 589, 609, 630, 632, and 665. The segment at 610-633 (FGGKEVDQEPSGEGVTRVDGSESE) is disordered. Residues 781 to 804 (EEEKQKLEKLQSLRVKFLRLLQRL) adopt a coiled-coil conformation. Residues 853 to 1087 (IFSLNILVLG…RPQEPLDHRK (235 aa)) form the AIG1-type G domain. Residues 862 to 869 (GKAGVGKS) are G1. Residues 865–870 (GVGKSA) and 884–889 (DAFGLS) contribute to the GTP site. Ser-869 contributes to the Mg(2+) binding site. The tract at residues 884-887 (DAFG) is homodimerization. Positions 889–893 (STTSV) are G2. The tract at residues 909 to 912 (DTPG) is G3. The segment at 947–952 (RLDTQT) is homodimerization. Residues 981-984 (THAA) are G4. GTP contacts are provided by residues His-982 and 1035–1036 (EN). Residues 1035-1037 (ENH) form a G5 region. A coiled-coil region spans residues 1175 to 1203 (DYRVKLLQKKQWREELKRMKEMKKNGKKL). The tract at residues 1203–1222 (LGESEFGYPGEEDDPENGAP) is disordered.

This sequence belongs to the TRAFAC class TrmE-Era-EngA-EngB-Septin-like GTPase superfamily. AIG1/Toc34/Toc159-like paraseptin GTPase family. TOC159 subfamily. Homodimer and heterodimer with TOC33. Part of the TOC core complex that includes 1 protein for the specific recognition of transit peptides surrounded by a ring composed of four proteins forming translocation channels, and four to five GTP-binding proteins providing energy. This core complex can interact with components of the TIC complex to form a larger import complex. Chloroplastic protein precursor such as prSS (precursor of the RuBisCO small subunit) interacts with these complexes. The TOC complex contains a specific subset of polar lipids such as digalactosyldiacylglyceride (DGDG), phosphatidylcholine (PC) and phosphatidylglycerol (PG). Interacts with SP1. Mg(2+) serves as cofactor. In terms of processing, phosphorylated by KOC1.

The protein resides in the plastid. It is found in the chloroplast outer membrane. Its subcellular location is the cytoplasm. Its function is as follows. GTPase involved in protein precursor import into chloroplasts. Seems to recognize chloroplast-destined precursor proteins and regulate their presentation to the translocation channel through GTP hydrolysis. Required for chloroplast biogenesis. Probably specialized in the import of nuclear encoded photosynthetic preproteins from the cytoplasm to the chloroplast. This Arabidopsis thaliana (Mouse-ear cress) protein is Translocase of chloroplast 159, chloroplastic.